The primary structure comprises 169 residues: General odorant-binding protein 57a (169 aa).

An N-terminal signal peptide occupies residues 1-20 (MFNTRLAIFLLLIVVSLSQA). Disulfide bonds link C39–C77, C73–C120, and C111–C129.

Belongs to the PBP/GOBP family.

Present in the aqueous fluid surrounding olfactory sensory dendrites and are thought to aid in the capture and transport of hydrophobic odorants into and through this fluid. This is General odorant-binding protein 57a from Drosophila melanogaster (Fruit fly).